The chain runs to 568 residues: Type 3 secretion system secretin (568 aa).

The first 15 residues, 1-15 (MAAALLLWTAGTVCA), serve as a signal peptide directing secretion. Residues 203–292 (YGGDGPSDSG…RGSTPIIRAD (90 aa)) form a disordered region. Over residues 243–257 (LGGGKSPLPPGGTGQ) the composition is skewed to gly residues. Over residues 273 to 284 (NRLRSDELDDRG) the composition is skewed to basic and acidic residues.

Belongs to the bacterial secretin family. T3SS SctC subfamily. In terms of assembly, the core secretion machinery of the T3SS is composed of approximately 20 different proteins, including cytoplasmic components, a base, an export apparatus and a needle. This subunit is part of the base, which anchors the injectisome in the bacterial cell envelope. Forms a stable homooligomeric complex.

Its subcellular location is the cell outer membrane. In terms of biological role, component of the type III secretion system (T3SS), also called injectisome, which is used to inject bacterial effector proteins into eukaryotic host cells. Forms a ring-shaped multimeric structure with an apparent central pore in the outer membrane. The sequence is that of Type 3 secretion system secretin from Ralstonia nicotianae (strain ATCC BAA-1114 / GMI1000) (Ralstonia solanacearum).